Consider the following 417-residue polypeptide: MAEIKNYTLNFGPQHPAAHGVLRLVLELDGEVIQRADPHIGLLHRGTEKLAESKTFIQSLPYMDRLDYVSMMCNEHAYCLAIEKLMGIQVPERAQYIRVMFSEITRLLNHLLWLGCHGMDCGAMNMLIYCFREREDLFDMYEAVSGARMHAAYFRPGGVYRDLPDVMPQYKVSKIRNAKAMARLNENRQGSLLDFIDDFTKRFPTLVDEYETLLTDNRIWKQRTVGIGVLTPERALNLGLTGAMIRGSGIAWDLRKTQPYDVYDRMDFDIPVGVNGDTYDRYLVRVEEMRQSNRIIEQCSAWLRANPGPVITDNHKVAPPSRVEMKTSMEELIHHFKLFTEGFHVPEGEAYAAVEHPKGEFGIYAISDGANKPYRLKIRAPGFAHLAALDEMSRGHMIADAVAIIGTMDIVFGEIDR.

This sequence belongs to the complex I 49 kDa subunit family. As to quaternary structure, NDH-1 is composed of 14 different subunits. Subunits NuoB, C, D, E, F, and G constitute the peripheral sector of the complex.

It is found in the cell inner membrane. It carries out the reaction a quinone + NADH + 5 H(+)(in) = a quinol + NAD(+) + 4 H(+)(out). In terms of biological role, NDH-1 shuttles electrons from NADH, via FMN and iron-sulfur (Fe-S) centers, to quinones in the respiratory chain. The immediate electron acceptor for the enzyme in this species is believed to be ubiquinone. Couples the redox reaction to proton translocation (for every two electrons transferred, four hydrogen ions are translocated across the cytoplasmic membrane), and thus conserves the redox energy in a proton gradient. In Leptothrix cholodnii (strain ATCC 51168 / LMG 8142 / SP-6) (Leptothrix discophora (strain SP-6)), this protein is NADH-quinone oxidoreductase subunit D.